Reading from the N-terminus, the 482-residue chain is tRNA sulfurtransferase (482 aa).

In terms of domain architecture, THUMP spans 61 to 165; the sequence is LAIRDALTRI…DDRLLLIKGR (105 aa). ATP contacts are provided by residues 183–184, lysine 265, glycine 287, and glutamine 296; that span reads LI. A disulfide bridge links cysteine 344 with cysteine 456. One can recognise a Rhodanese domain in the interval 404–482; the sequence is FGPNDVILDI…GFNNVKVYRP (79 aa). The active-site Cysteine persulfide intermediate is cysteine 456.

This sequence belongs to the ThiI family.

Its subcellular location is the cytoplasm. The catalysed reaction is [ThiI sulfur-carrier protein]-S-sulfanyl-L-cysteine + a uridine in tRNA + 2 reduced [2Fe-2S]-[ferredoxin] + ATP + H(+) = [ThiI sulfur-carrier protein]-L-cysteine + a 4-thiouridine in tRNA + 2 oxidized [2Fe-2S]-[ferredoxin] + AMP + diphosphate. The enzyme catalyses [ThiS sulfur-carrier protein]-C-terminal Gly-Gly-AMP + S-sulfanyl-L-cysteinyl-[cysteine desulfurase] + AH2 = [ThiS sulfur-carrier protein]-C-terminal-Gly-aminoethanethioate + L-cysteinyl-[cysteine desulfurase] + A + AMP + 2 H(+). It functions in the pathway cofactor biosynthesis; thiamine diphosphate biosynthesis. In terms of biological role, catalyzes the ATP-dependent transfer of a sulfur to tRNA to produce 4-thiouridine in position 8 of tRNAs, which functions as a near-UV photosensor. Also catalyzes the transfer of sulfur to the sulfur carrier protein ThiS, forming ThiS-thiocarboxylate. This is a step in the synthesis of thiazole, in the thiamine biosynthesis pathway. The sulfur is donated as persulfide by IscS. The chain is tRNA sulfurtransferase from Escherichia coli O9:H4 (strain HS).